Consider the following 175-residue polypeptide: Translation initiation factor IF-3 (175 aa).

Belongs to the IF-3 family. In terms of assembly, monomer.

It is found in the cytoplasm. Its function is as follows. IF-3 binds to the 30S ribosomal subunit and shifts the equilibrium between 70S ribosomes and their 50S and 30S subunits in favor of the free subunits, thus enhancing the availability of 30S subunits on which protein synthesis initiation begins. This is Translation initiation factor IF-3 from Staphylococcus epidermidis (strain ATCC 35984 / DSM 28319 / BCRC 17069 / CCUG 31568 / BM 3577 / RP62A).